A 477-amino-acid polypeptide reads, in one-letter code: Aspartyl/glutamyl-tRNA(Asn/Gln) amidotransferase subunit B (477 aa).

Belongs to the GatB/GatE family. GatB subfamily. In terms of assembly, heterotrimer of A, B and C subunits.

It carries out the reaction L-glutamyl-tRNA(Gln) + L-glutamine + ATP + H2O = L-glutaminyl-tRNA(Gln) + L-glutamate + ADP + phosphate + H(+). The enzyme catalyses L-aspartyl-tRNA(Asn) + L-glutamine + ATP + H2O = L-asparaginyl-tRNA(Asn) + L-glutamate + ADP + phosphate + 2 H(+). In terms of biological role, allows the formation of correctly charged Asn-tRNA(Asn) or Gln-tRNA(Gln) through the transamidation of misacylated Asp-tRNA(Asn) or Glu-tRNA(Gln) in organisms which lack either or both of asparaginyl-tRNA or glutaminyl-tRNA synthetases. The reaction takes place in the presence of glutamine and ATP through an activated phospho-Asp-tRNA(Asn) or phospho-Glu-tRNA(Gln). The protein is Aspartyl/glutamyl-tRNA(Asn/Gln) amidotransferase subunit B of Coxiella burnetii (strain RSA 493 / Nine Mile phase I).